Reading from the N-terminus, the 61-residue chain is Probable tautomerase SERP0934 (61 aa).

Pro2 acts as the Proton acceptor; via imino nitrogen in catalysis.

This sequence belongs to the 4-oxalocrotonate tautomerase family.

This Staphylococcus epidermidis (strain ATCC 35984 / DSM 28319 / BCRC 17069 / CCUG 31568 / BM 3577 / RP62A) protein is Probable tautomerase SERP0934.